Consider the following 277-residue polypeptide: uncharacterized protein (277 aa).

The SWIM-type zinc finger occupies 139–167 (TARELSLDCSCPDYAVPCKHLAATFYLLA).

This is an uncharacterized protein from Mycobacterium tuberculosis (strain ATCC 25618 / H37Rv).